We begin with the raw amino-acid sequence, 185 residues long: Ribosome-recycling factor (185 aa).

This sequence belongs to the RRF family.

Its subcellular location is the cytoplasm. Functionally, responsible for the release of ribosomes from messenger RNA at the termination of protein biosynthesis. May increase the efficiency of translation by recycling ribosomes from one round of translation to another. This is Ribosome-recycling factor from Glaesserella parasuis serovar 5 (strain SH0165) (Haemophilus parasuis).